The chain runs to 660 residues: Acetyl-coenzyme A synthetase (660 aa).

CoA-binding positions include 197–200 (RGGK) and threonine 317. ATP contacts are provided by residues 397–399 (GEP), 421–426 (DTFWQT), aspartate 512, and arginine 528. CoA is bound at residue serine 536. Arginine 539 contributes to the ATP binding site. The Mg(2+) site is built by valine 550 and valine 555. The residue at position 625 (lysine 625) is an N6-acetyllysine.

The protein belongs to the ATP-dependent AMP-binding enzyme family. Requires Mg(2+) as cofactor. In terms of processing, acetylated. Deacetylation by the SIR2-homolog deacetylase activates the enzyme.

The catalysed reaction is acetate + ATP + CoA = acetyl-CoA + AMP + diphosphate. In terms of biological role, catalyzes the conversion of acetate into acetyl-CoA (AcCoA), an essential intermediate at the junction of anabolic and catabolic pathways. AcsA undergoes a two-step reaction. In the first half reaction, AcsA combines acetate with ATP to form acetyl-adenylate (AcAMP) intermediate. In the second half reaction, it can then transfer the acetyl group from AcAMP to the sulfhydryl group of CoA, forming the product AcCoA. The chain is Acetyl-coenzyme A synthetase from Cupriavidus pinatubonensis (strain JMP 134 / LMG 1197) (Cupriavidus necator (strain JMP 134)).